We begin with the raw amino-acid sequence, 525 residues long: MEWKNLDKCTSFTQLQKAHKEQAENLKLADIFDTENSVKRVKNYSVKMGGNLKYNYAAKPVNDEILKALQSLADEQKLIEKYELLLNGDFINTGENRMVLHQLTRGQLKNDVVYKGVNMRSFYLNELKKIKEFSEAVHSGKIKTSQGKVFTDVVQIGIGGSDLGPRAMYIALKNRAKKKMRAHFISNVDPDDAAEVLNSINLASTLFILVSKSGTTQETLANERFVKSVLEKNGLDCKKQMLAVTSETSPLANNPDYLTSFYMDDFIGGRYSSTSVCGAAVLALAFGMETVEAFLKGAAEGDKLSLNKNIKENASLLDALLGVYERNILGCSATAILPYSQALSRFPAHLQQLDMESNGKTVNRFGEKVSYKTGPVIFGEPGTNGQHSFYQLLHQGSDIIPLQFIGFKKSQIGLDIESEGSTNMQKLNANLAAQIMAFAAGKTDENKNKDFAGNRPASLIYGEELNPENLGALLAHYENKVMFQGFIWNLNSFDQEGVQLGKTLAKKVLSNDMPPALKAFSEFLL.

Catalysis depends on Glu356, which acts as the Proton donor. Residues His387 and Lys502 contribute to the active site.

It belongs to the GPI family.

It localises to the cytoplasm. The catalysed reaction is alpha-D-glucose 6-phosphate = beta-D-fructose 6-phosphate. It participates in carbohydrate biosynthesis; gluconeogenesis. It functions in the pathway carbohydrate degradation; glycolysis; D-glyceraldehyde 3-phosphate and glycerone phosphate from D-glucose: step 2/4. Its function is as follows. Catalyzes the reversible isomerization of glucose-6-phosphate to fructose-6-phosphate. The polypeptide is Glucose-6-phosphate isomerase (Treponema denticola (strain ATCC 35405 / DSM 14222 / CIP 103919 / JCM 8153 / KCTC 15104)).